Consider the following 882-residue polypeptide: Valine--tRNA ligase (882 aa).

Residues 45-55 (PNVTGKLHLGH) carry the 'HIGH' region motif. A 'KMSKS' region motif is present at residues 519–523 (KMSKS). Lys-522 lines the ATP pocket. Positions 808 to 877 (LADLLNVEEE…DATQERIVEM (70 aa)) form a coiled coil.

The protein belongs to the class-I aminoacyl-tRNA synthetase family. ValS type 1 subfamily. In terms of assembly, monomer.

It localises to the cytoplasm. The enzyme catalyses tRNA(Val) + L-valine + ATP = L-valyl-tRNA(Val) + AMP + diphosphate. Catalyzes the attachment of valine to tRNA(Val). As ValRS can inadvertently accommodate and process structurally similar amino acids such as threonine, to avoid such errors, it has a 'posttransfer' editing activity that hydrolyzes mischarged Thr-tRNA(Val) in a tRNA-dependent manner. This chain is Valine--tRNA ligase, found in Streptococcus pyogenes serotype M6 (strain ATCC BAA-946 / MGAS10394).